A 580-amino-acid polypeptide reads, in one-letter code: Laccase-5 (580 aa).

A signal peptide spans 1 to 25 (MDVTKSLLCFISFVAFLLFSSVAEA). 2 consecutive Plastocyanin-like domains span residues 34-150 (IIQA…PPAG) and 160-312 (RNVP…YKSA). Asparagine 80 carries N-linked (GlcNAc...) asparagine glycosylation. Histidine 84, histidine 86, histidine 129, and histidine 131 together coordinate Cu cation. Asparagine 189, asparagine 300, asparagine 340, asparagine 392, asparagine 402, asparagine 410, and asparagine 443 each carry an N-linked (GlcNAc...) asparagine glycan. Residues 428 to 564 (DFPAKPPVKF…AMAFLVENGN (137 aa)) enclose the Plastocyanin-like 3 domain. Residues histidine 481, histidine 484, histidine 486, histidine 543, cysteine 544, histidine 545, and histidine 549 each contribute to the Cu cation site.

It belongs to the multicopper oxidase family. Requires Cu cation as cofactor. Ubiquitous and constitutive.

It localises to the secreted. It is found in the extracellular space. The protein localises to the apoplast. The catalysed reaction is 4 hydroquinone + O2 = 4 benzosemiquinone + 2 H2O. Lignin degradation and detoxification of lignin-derived products. The protein is Laccase-5 (LAC5) of Arabidopsis thaliana (Mouse-ear cress).